A 206-amino-acid chain; its full sequence is Small ribosomal subunit protein uS4 (206 aa).

The disordered stretch occupies residues 18 to 46 (NIWGRPKSPVNRREYGPGQHGQRRKQKMS). Residues 94-154 (RRLDAVVYRA…EKSRQMAALL (61 aa)) enclose the S4 RNA-binding domain.

The protein belongs to the universal ribosomal protein uS4 family. As to quaternary structure, part of the 30S ribosomal subunit. Contacts protein S5. The interaction surface between S4 and S5 is involved in control of translational fidelity.

Functionally, one of the primary rRNA binding proteins, it binds directly to 16S rRNA where it nucleates assembly of the body of the 30S subunit. In terms of biological role, with S5 and S12 plays an important role in translational accuracy. The sequence is that of Small ribosomal subunit protein uS4 from Dinoroseobacter shibae (strain DSM 16493 / NCIMB 14021 / DFL 12).